The primary structure comprises 494 residues: Gram-negative bacteria-binding protein 1 (494 aa).

Positions 1–19 (MPGLCIGILLLIGFGCTTA) are cleaved as a signal peptide. The region spanning 20–120 (YKIPTPTVEL…QPLPVCNLGG (101 aa)) is the CBM39 domain. N56 and N81 each carry an N-linked (GlcNAc...) asparagine glycan. Residues 126–160 (GCSPGDDDFTDDNQLSTEDSALEPTAPSVCEPSES) are disordered. A GH16 domain is found at 135–494 (TDDNQLSTED…DYVRVFATDN (360 aa)). N-linked (GlcNAc...) asparagine glycosylation occurs at N185.

This sequence belongs to the insect beta-1,3-glucan binding protein family.

Its subcellular location is the cell membrane. In terms of biological role, plays a key role in innate immunity by acting as a pattern recognition receptor for beta-1,3-glucan from fungi and lipopolysaccharide from Gram-negative bacteria. Upon recognition of invading microorganism-derived products, acts upstream of protease spz processing enzyme SPE to activate the Toll pathway and to induce the expression of antimicrobial peptides drosomycin, cecropin and attacin. The sequence is that of Gram-negative bacteria-binding protein 1 from Drosophila melanogaster (Fruit fly).